A 532-amino-acid chain; its full sequence is Flavin-containing monooxygenase 3 (532 aa).

FAD-binding positions include 9–13 (GAGVS), glutamate 32, 40–41 (LW), and 61–62 (NS). NADP(+) is bound by residues 60-61 (TN) and 195-198 (SGCD). Serine 401 bears the Phosphoserine mark. Residues 510–530 (FFFHWLKPFAIPILLIAVFLG) traverse the membrane as a helical segment.

The protein belongs to the FMO family. The cofactor is FAD. Liver.

It is found in the microsome membrane. It localises to the endoplasmic reticulum membrane. The catalysed reaction is trimethylamine + NADPH + O2 = trimethylamine N-oxide + NADP(+) + H2O. It catalyses the reaction N,N-dimethylaniline + NADPH + O2 + H(+) = N,N-dimethylaniline N-oxide + NADP(+) + H2O. It carries out the reaction hypotaurine + NADPH + O2 + H(+) = taurine + NADP(+) + H2O. The enzyme catalyses (S)-nicotine + NADPH + O2 = trans-(S)-nicotine N(1')-oxide + NADP(+) + H2O. The catalysed reaction is albendazole + NADPH + O2 + H(+) = albendazole S-oxide + NADP(+) + H2O. Essential hepatic enzyme that catalyzes the oxygenation of a wide variety of nitrogen- and sulfur-containing compounds including drugs as well as dietary compounds. Plays an important role in the metabolism of trimethylamine (TMA), via the production of trimethylamine N-oxide (TMAO) metabolite. TMA is generated by the action of gut microbiota using dietary precursors such as choline, choline containing compounds, betaine or L-carnitine. By regulating TMAO concentration, FMO3 directly impacts both platelet responsiveness and rate of thrombus formation. In Macaca mulatta (Rhesus macaque), this protein is Flavin-containing monooxygenase 3 (FMO3).